We begin with the raw amino-acid sequence, 115 residues long: Guanylin (115 aa).

Residues 1 to 23 (MNAWLLSVLCLLGALAVLVEGVT) form the signal peptide. The propeptide occupies 24 to 100 (VQDGDLSFPL…LQRLEAIAQD (77 aa)). 3 disulfides stabilise this stretch: C69/C82, C104/C112, and C107/C115.

This sequence belongs to the guanylin family. Intestine and in low abundance in adrenal gland, kidney, and uterus/oviduct.

It localises to the secreted. Endogenous activator of intestinal guanylate cyclase. It stimulates this enzyme through the same receptor binding region as the heat-stable enterotoxins. This Rattus norvegicus (Rat) protein is Guanylin (Guca2a).